The following is a 427-amino-acid chain: Trigger factor (427 aa).

One can recognise a PPIase FKBP-type domain in the interval 163 to 248; sequence GNIAIIDFKG…VKGIKAKELP (86 aa).

The protein belongs to the FKBP-type PPIase family. Tig subfamily.

Its subcellular location is the cytoplasm. The catalysed reaction is [protein]-peptidylproline (omega=180) = [protein]-peptidylproline (omega=0). Involved in protein export. Acts as a chaperone by maintaining the newly synthesized protein in an open conformation. Functions as a peptidyl-prolyl cis-trans isomerase. The polypeptide is Trigger factor (Clostridium botulinum (strain Eklund 17B / Type B)).